Here is a 178-residue protein sequence, read N- to C-terminus: ATP synthase subunit delta (178 aa).

The protein belongs to the ATPase delta chain family. F-type ATPases have 2 components, F(1) - the catalytic core - and F(0) - the membrane proton channel. F(1) has five subunits: alpha(3), beta(3), gamma(1), delta(1), epsilon(1). F(0) has three main subunits: a(1), b(2) and c(10-14). The alpha and beta chains form an alternating ring which encloses part of the gamma chain. F(1) is attached to F(0) by a central stalk formed by the gamma and epsilon chains, while a peripheral stalk is formed by the delta and b chains.

The protein resides in the cell membrane. Its function is as follows. F(1)F(0) ATP synthase produces ATP from ADP in the presence of a proton or sodium gradient. F-type ATPases consist of two structural domains, F(1) containing the extramembraneous catalytic core and F(0) containing the membrane proton channel, linked together by a central stalk and a peripheral stalk. During catalysis, ATP synthesis in the catalytic domain of F(1) is coupled via a rotary mechanism of the central stalk subunits to proton translocation. Functionally, this protein is part of the stalk that links CF(0) to CF(1). It either transmits conformational changes from CF(0) to CF(1) or is implicated in proton conduction. The polypeptide is ATP synthase subunit delta (Streptococcus equinus (Streptococcus bovis)).